A 426-amino-acid chain; its full sequence is Serine hydroxymethyltransferase (426 aa).

(6S)-5,6,7,8-tetrahydrofolate-binding positions include leucine 121 and 125 to 127 (GHL). The residue at position 230 (lysine 230) is an N6-(pyridoxal phosphate)lysine. Position 354-356 (354-356 (SPF)) interacts with (6S)-5,6,7,8-tetrahydrofolate.

The protein belongs to the SHMT family. As to quaternary structure, homodimer. It depends on pyridoxal 5'-phosphate as a cofactor.

It is found in the cytoplasm. The enzyme catalyses (6R)-5,10-methylene-5,6,7,8-tetrahydrofolate + glycine + H2O = (6S)-5,6,7,8-tetrahydrofolate + L-serine. The protein operates within one-carbon metabolism; tetrahydrofolate interconversion. It functions in the pathway amino-acid biosynthesis; glycine biosynthesis; glycine from L-serine: step 1/1. Catalyzes the reversible interconversion of serine and glycine with tetrahydrofolate (THF) serving as the one-carbon carrier. This reaction serves as the major source of one-carbon groups required for the biosynthesis of purines, thymidylate, methionine, and other important biomolecules. Also exhibits THF-independent aldolase activity toward beta-hydroxyamino acids, producing glycine and aldehydes, via a retro-aldol mechanism. The chain is Serine hydroxymethyltransferase from Acaryochloris marina (strain MBIC 11017).